The following is a 751-amino-acid chain: Palmitoyltransferase ZDHHC8B (751 aa).

The Cytoplasmic portion of the chain corresponds to 1–13; that stretch reads MPNSVGKRFKPTK. The helical transmembrane segment at 14 to 34 threads the bilayer; that stretch reads YIPVSTAATLLVGSTTLFFVF. Residues 35 to 41 are Extracellular-facing; sequence TCPWLTK. Residues 42–62 traverse the membrane as a helical segment; the sequence is AVSPVVPLYNGIVFLFVLANF. Residues 63–148 are Cytoplasmic-facing; sequence SMATFMDPGV…NCIGRRNYRY (86 aa). The DHHC domain occupies 104–154; the sequence is KWCATCHFYRPPRCSHCSVCDNCVEEFDHHCPWVNNCIGRRNYRYFFLFLL. Residue C134 is the S-palmitoyl cysteine intermediate of the active site. Residues 149–169 traverse the membrane as a helical segment; that stretch reads FFLFLLSLSVHMVGVFSFGLL. The Extracellular segment spans residues 170 to 185; sequence FVLHHLETLSALHTTV. A helical membrane pass occupies residues 186-206; sequence TLVVMCVTGLFFIPVMGLTGF. Topologically, residues 207-751 are cytoplasmic; that stretch reads HMVLVARGRT…VGGTTYEISV (545 aa). Disordered regions lie at residues 293-346, 437-461, 633-659, 666-685, and 703-736; these read RSKS…PSTP, CTPL…SPGT, RSSA…GMNR, RSPV…SPSY, and HLGT…HTSV. The segment covering 326–338 has biased composition (low complexity); it reads SQLTSSEESSLSS. 3 stretches are compositionally biased toward polar residues: residues 633 to 651, 669 to 681, and 724 to 733; these read RSSA…TSLH, VHQS…SVPR, and GTPSGTPSRH.

Belongs to the DHHC palmitoyltransferase family. ERF2/ZDHHC9 subfamily.

The protein resides in the golgi apparatus membrane. It is found in the mitochondrion membrane. It carries out the reaction L-cysteinyl-[protein] + hexadecanoyl-CoA = S-hexadecanoyl-L-cysteinyl-[protein] + CoA. Its function is as follows. Palmitoyltransferase that catalyzes the addition of palmitate onto various protein substrates and therefore function in several unrelated biological processes. This chain is Palmitoyltransferase ZDHHC8B, found in Danio rerio (Zebrafish).